The sequence spans 134 residues: UPF0412 protein YaaI (134 aa).

Positions 1–23 (MRSVLTISVGLLFGLALSSVAHA) are cleaved as a signal peptide.

This sequence belongs to the UPF0412 family.

This is UPF0412 protein YaaI from Salmonella paratyphi A (strain ATCC 9150 / SARB42).